Here is a 195-residue protein sequence, read N- to C-terminus: HTH-type transcriptional regulator BetI (195 aa).

An HTH tetR-type domain is found at 8–68 (EIRRAQLIDA…ATMRHVLRDL (61 aa)). Positions 31–50 (TLASVAQRANISTGIVSHYF) form a DNA-binding region, H-T-H motif.

It functions in the pathway amine and polyamine biosynthesis; betaine biosynthesis via choline pathway [regulation]. Functionally, repressor involved in the biosynthesis of the osmoprotectant glycine betaine. It represses transcription of the choline transporter BetT and the genes of BetAB involved in the synthesis of glycine betaine. This is HTH-type transcriptional regulator BetI from Burkholderia thailandensis (strain ATCC 700388 / DSM 13276 / CCUG 48851 / CIP 106301 / E264).